The following is a 588-amino-acid chain: Vesicular glutamate transporter 3 (588 aa).

The Cytoplasmic segment spans residues 1 to 76 (MPFNAFDTFK…CSCCGIPKRY (76 aa)). A helical membrane pass occupies residues 77 to 97 (IIAVMSGLGFCISFGIRCNLG). The Vesicular portion of the chain corresponds to 98–130 (VAIVEMVNNSTVYVDGKPEIQTAQFNWDPETVG). A glycan (N-linked (GlcNAc...) asparagine) is linked at Asn106. The chain crosses the membrane as a helical span at residues 131 to 151 (LIHGSFFWGYIVTQIPGGFIS). Topologically, residues 152 to 153 (NK) are cytoplasmic. A helical membrane pass occupies residues 154 to 174 (FAANRVFGAAIFLTSTLNMFI). At 175-182 (PSAARVHY) the chain is on the vesicular side. The helical transmembrane segment at 183-203 (GCVMCVRILQGLVEGVTYPAC) threads the bilayer. Topologically, residues 204 to 221 (HGMWSKWAPPLERSRLAT) are cytoplasmic. The helical transmembrane segment at 222 to 242 (TSFCGSYAGAVVAMPLAGVLV) threads the bilayer. Topologically, residues 243–249 (QYIGWAS) are vesicular. A helical membrane pass occupies residues 250–270 (VFYIYGMFGIIWYMFWLLQAY). Residues 271 to 314 (ECPAVHPTISNEERTYIETSIGEGANLASLSKFNTPWRRFFTSL) are Cytoplasmic-facing. A helical membrane pass occupies residues 315–335 (PVYAIIVANFCRSWTFYLLLI). Residues 336–353 (SQPAYFEEVFGFAISKVG) lie on the Vesicular side of the membrane. Residues 354-374 (LLSAVPHMVMTIVVPIGGQLA) traverse the membrane as a helical segment. At 375-390 (DYLRSRKILTTTAVRK) the chain is on the cytoplasmic side. The chain crosses the membrane as a helical span at residues 391–411 (IMNCGGFGMEATLLLVVGFSH). Topologically, residues 412-413 (TK) are vesicular. The helical transmembrane segment at 414-434 (GVAISFLVLAVGFSGFAISGF) threads the bilayer. The Cytoplasmic portion of the chain corresponds to 435-447 (NVNHLDIAPRYAS). The chain crosses the membrane as a helical span at residues 448–468 (ILMGISNGVGTLSGMVCPLIV). Over 469 to 481 (GAMTKHKTREEWQ) the chain is Vesicular. A helical membrane pass occupies residues 482-502 (NVFLIAALVHYSGVIFYGVFA). Over 503 to 585 (SGEKQDWADP…LSYQNEEDFS (83 aa)) the chain is Cytoplasmic. The tract at residues 539-588 (FVSPRKKMSYGATTQNCEVQKTDRRQQRESAFEGEEPLSYQNEEDFSETS) is disordered. The span at 558–569 (QKTDRRQQRESA) shows a compositional bias: basic and acidic residues. The span at 570 to 588 (FEGEEPLSYQNEEDFSETS) shows a compositional bias: acidic residues.

This sequence belongs to the major facilitator superfamily. Sodium/anion cotransporter family. VGLUT subfamily. As to expression, expressed in brain, kidney and liver. Expressed within the amygdala, brainstem, cerberal cortex, dorsal root ganglia, dorsal spinal cord, hippocampus, hypothalamus, retina, striatum and ventral spinal cord. Expressed within neurons of the caudate-putamen, olfactory tubercle, nucleus accumbens, hippocampus, interpeduncular nucleus and dorsal and medial raphe nuclei. Expressed in inner hair cells of the ear. Expressed at synaptic terminals within the lateral superior olive (LSO), a nucleus of the mammalian sound localization system, and in the medial nucleus of the trapezoid body (MNTB), which provides inhibitory input to the LSO.

Its subcellular location is the cytoplasmic vesicle. It localises to the secretory vesicle. The protein resides in the synaptic vesicle membrane. It is found in the cell membrane. The protein localises to the synapse. Its subcellular location is the synaptosome. The catalysed reaction is L-glutamate(out) = L-glutamate(in). The enzyme catalyses chloride(in) = chloride(out). It carries out the reaction 3 Na(+)(out) + phosphate(out) = 3 Na(+)(in) + phosphate(in). The L-glutamate uniporter activity exhibits a biphasic dependence on chloride concentration. Chloride channel activity is allosterically activated by lumenal H(+) and Cl(-) leading to synaptic vesicles acidification. The glutamate transport activity is allosterically activated by lumenal H(+) and Cl(-), preventing non-vesicular L-glutamate release. In terms of biological role, multifunctional transporter that transports L-glutamate as well as multiple ions such as chloride, sodium and phosphate. At the synaptic vesicle membrane, mainly functions as an uniporter that mediates the uptake of L-glutamate into synaptic vesicles at presynaptic nerve terminals of excitatory neural cells. The L-glutamate uniporter activity is electrogenic and is driven by the proton electrochemical gradient, mainly by the electrical gradient established by the vacuolar H(+)-ATPase across the synaptic vesicle membrane. In addition, functions as a chloride channel that allows a chloride permeation through the synaptic vesicle membrane that affects the proton electrochemical gradient and promotes synaptic vesicles acidification. At the plasma membrane, following exocytosis, functions as a symporter of Na(+) and phosphate from the extracellular space to the cytoplasm allowing synaptic phosphate homeostasis regulation. The symporter activity is electrogenic. Moreover, operates synergistically with SLC18A3/VACHT under a constant H(+) gradient, thereby allowing striatal vesicular acetylcholine uptake. The sequence is that of Vesicular glutamate transporter 3 from Rattus norvegicus (Rat).